The chain runs to 365 residues: U1 snRNP-associated protein usp109 (365 aa).

RRM domains are found at residues 3 to 79 (TSLW…VVPE), 86 to 162 (YMLF…SVKS), and 189 to 259 (TAVY…WARP).

Component of the U1 snRNP complex.

Its subcellular location is the nucleus. The protein is U1 snRNP-associated protein usp109 (usp109) of Schizosaccharomyces pombe (strain 972 / ATCC 24843) (Fission yeast).